The sequence spans 238 residues: Orotidine 5'-phosphate decarboxylase (238 aa).

Substrate is bound by residues Asp10, Lys32, 59–68 (DLKLHDIPNT), Thr122, Arg184, Gln193, Gly213, and Arg214. Lys61 (proton donor) is an active-site residue.

The protein belongs to the OMP decarboxylase family. Type 1 subfamily. Homodimer.

The enzyme catalyses orotidine 5'-phosphate + H(+) = UMP + CO2. It functions in the pathway pyrimidine metabolism; UMP biosynthesis via de novo pathway; UMP from orotate: step 2/2. Catalyzes the decarboxylation of orotidine 5'-monophosphate (OMP) to uridine 5'-monophosphate (UMP). The polypeptide is Orotidine 5'-phosphate decarboxylase (Bacillus cereus (strain AH187)).